The chain runs to 455 residues: CDP-diacylglycerol--serine O-phosphatidyltransferase (455 aa).

2 consecutive PLD phosphodiesterase domains span residues V134 to Y160 and G356 to A383.

The protein belongs to the CDP-alcohol phosphatidyltransferase class-II family. As to quaternary structure, multimeric.

Its subcellular location is the cytoplasm. It localises to the cell inner membrane. The enzyme catalyses a CDP-1,2-diacyl-sn-glycerol + L-serine = a 1,2-diacyl-sn-glycero-3-phospho-L-serine + CMP + H(+). This Haemophilus influenzae (strain ATCC 51907 / DSM 11121 / KW20 / Rd) protein is CDP-diacylglycerol--serine O-phosphatidyltransferase (pssA).